The chain runs to 595 residues: APOBEC1 complementation factor (595 aa).

3 consecutive RRM domains span residues 56–134, 136–218, and 231–303; these read CEIF…ASVD, CRLF…WAEP, and KILY…LAKP. The interval 360 to 409 is required for nuclear localization; the sequence is HFPATKGHLSNRALIRTPSVREIYMNVPVGAAGVRGLGGRGYLAYTGLGR.

As to quaternary structure, part of the apolipoprotein B mRNA editing complex with APOBEC1. Interacts with TNPO2; TNPO2 may be responsible for transport of A1CF into the nucleus. Interacts with SYNCRIP. Interacts with CELF2/CUGBP2. Interacts with RBM47. As to expression, expressed primarily in liver, small intestine and kidney.

It localises to the nucleus. It is found in the endoplasmic reticulum. The protein localises to the cytoplasm. Its function is as follows. Essential component of the apolipoprotein B mRNA editing enzyme complex which is responsible for the postranscriptional editing of a CAA codon for Gln to a UAA codon for stop in APOB mRNA. Binds to APOB mRNA and is probably responsible for docking the catalytic subunit, APOBEC1, to the mRNA to allow it to deaminate its target cytosine. The complex also seems to protect the edited APOB mRNA from nonsense-mediated decay. The sequence is that of APOBEC1 complementation factor (A1cf) from Mus musculus (Mouse).